Here is a 108-residue protein sequence, read N- to C-terminus: Small proline-rich protein 5 (108 aa).

Residues 1–13 (MSQQKQKQCAPPQ) are compositionally biased toward low complexity. 2 disordered regions span residues 1-24 (MSQQKQKQCAPPQQCCPPPQQRCP) and 73-108 (PPPQQTKQPCQPPPKCQEPCAPKCPPPQQCQTSKQK). Pro residues-rich tracts occupy residues 14–24 (QCCPPPQQRCP) and 73–100 (PPPQQTKQPCQPPPKCQEPCAPKCPPPQ).

In terms of biological role, positively regulates keratinocyte differentiation by inducing genes associated with epidermal differentiation. This Homo sapiens (Human) protein is Small proline-rich protein 5.